Here is a 236-residue protein sequence, read N- to C-terminus: 1-(5-phosphoribosyl)-5-[(5-phosphoribosylamino)methylideneamino] imidazole-4-carboxamide isomerase (236 aa).

D8 functions as the Proton acceptor in the catalytic mechanism. D127 functions as the Proton donor in the catalytic mechanism.

It belongs to the HisA/HisF family.

The protein localises to the cytoplasm. The enzyme catalyses 1-(5-phospho-beta-D-ribosyl)-5-[(5-phospho-beta-D-ribosylamino)methylideneamino]imidazole-4-carboxamide = 5-[(5-phospho-1-deoxy-D-ribulos-1-ylimino)methylamino]-1-(5-phospho-beta-D-ribosyl)imidazole-4-carboxamide. It participates in amino-acid biosynthesis; L-histidine biosynthesis; L-histidine from 5-phospho-alpha-D-ribose 1-diphosphate: step 4/9. In Campylobacter hominis (strain ATCC BAA-381 / DSM 21671 / CCUG 45161 / LMG 19568 / NCTC 13146 / CH001A), this protein is 1-(5-phosphoribosyl)-5-[(5-phosphoribosylamino)methylideneamino] imidazole-4-carboxamide isomerase.